Consider the following 256-residue polypeptide: Small ribosomal subunit protein eS1 (256 aa).

Positions Met1–Lys18 are enriched in basic residues. The segment at Met1 to Ala20 is disordered. Ala2 carries the N-acetylalanine; partial modification.

The protein belongs to the eukaryotic ribosomal protein eS1 family. As to quaternary structure, component of the small ribosomal subunit. Mature ribosomes consist of a small (40S) and a large (60S) subunit. The 40S subunit contains about 33 different proteins and 1 molecule of RNA (18S). The 60S subunit contains about 49 different proteins and 3 molecules of RNA (25S, 5.8S and 5S).

Its subcellular location is the cytoplasm. The chain is Small ribosomal subunit protein eS1 from Chaetomium globosum (strain ATCC 6205 / CBS 148.51 / DSM 1962 / NBRC 6347 / NRRL 1970) (Soil fungus).